The chain runs to 380 residues: Chaperone protein DnaJ (380 aa).

The 66-residue stretch at 4 to 69 (DYYEILGVTR…QKRAAYDRFG (66 aa)) folds into the J domain. The segment at 135 to 213 (GKTAQINIPS…CQGTRRVEKN (79 aa)) adopts a CR-type zinc-finger fold. The Zn(2+) site is built by Cys-148, Cys-151, Cys-165, Cys-168, Cys-187, Cys-190, Cys-201, and Cys-204. CXXCXGXG motif repeat units follow at residues 148-155 (CDSCEGSG), 165-172 (CGTCHGAG), 187-194 (CHACNGRG), and 201-208 (CPKCQGTR).

The protein belongs to the DnaJ family. As to quaternary structure, homodimer. Zn(2+) serves as cofactor.

Its subcellular location is the cytoplasm. In terms of biological role, participates actively in the response to hyperosmotic and heat shock by preventing the aggregation of stress-denatured proteins and by disaggregating proteins, also in an autonomous, DnaK-independent fashion. Unfolded proteins bind initially to DnaJ; upon interaction with the DnaJ-bound protein, DnaK hydrolyzes its bound ATP, resulting in the formation of a stable complex. GrpE releases ADP from DnaK; ATP binding to DnaK triggers the release of the substrate protein, thus completing the reaction cycle. Several rounds of ATP-dependent interactions between DnaJ, DnaK and GrpE are required for fully efficient folding. Also involved, together with DnaK and GrpE, in the DNA replication of plasmids through activation of initiation proteins. This is Chaperone protein DnaJ from Bartonella quintana (strain Toulouse) (Rochalimaea quintana).